The primary structure comprises 560 residues: DNA ligase B (560 aa).

The active-site N6-AMP-lysine intermediate is K124.

This sequence belongs to the NAD-dependent DNA ligase family. LigB subfamily.

It carries out the reaction NAD(+) + (deoxyribonucleotide)n-3'-hydroxyl + 5'-phospho-(deoxyribonucleotide)m = (deoxyribonucleotide)n+m + AMP + beta-nicotinamide D-nucleotide.. Functionally, catalyzes the formation of phosphodiester linkages between 5'-phosphoryl and 3'-hydroxyl groups in double-stranded DNA using NAD as a coenzyme and as the energy source for the reaction. The polypeptide is DNA ligase B (Escherichia coli O17:K52:H18 (strain UMN026 / ExPEC)).